The following is a 92-amino-acid chain: Small ribosomal subunit protein uS19 (92 aa).

Belongs to the universal ribosomal protein uS19 family.

In terms of biological role, protein S19 forms a complex with S13 that binds strongly to the 16S ribosomal RNA. The chain is Small ribosomal subunit protein uS19 from Cyanothece sp. (strain PCC 7425 / ATCC 29141).